A 327-amino-acid chain; its full sequence is Malate dehydrogenase (327 aa).

NAD(+) is bound at residue 12–18 (GAAGQIG). Positions 93 and 99 each coordinate substrate. NAD(+) is bound by residues asparagine 106, glutamine 113, and 130–132 (VGN). Substrate contacts are provided by asparagine 132 and arginine 163. The Proton acceptor role is filled by histidine 188.

This sequence belongs to the LDH/MDH superfamily. MDH type 2 family.

The catalysed reaction is (S)-malate + NAD(+) = oxaloacetate + NADH + H(+). In terms of biological role, catalyzes the reversible oxidation of malate to oxaloacetate. The polypeptide is Malate dehydrogenase (Cupriavidus necator (strain ATCC 17699 / DSM 428 / KCTC 22496 / NCIMB 10442 / H16 / Stanier 337) (Ralstonia eutropha)).